We begin with the raw amino-acid sequence, 438 residues long: Probable exopolygalacturonase B (438 aa).

An N-terminal signal peptide occupies residues 1 to 15; sequence MYLLPLTLFLTAAFG. N-linked (GlcNAc...) asparagine glycosylation is found at Asn118, Asn185, and Asn225. The PbH1 1 repeat unit spans residues 209–248; the sequence is TNDVSFDNVYIHAFSTNASSDPANTDGMDSLDVDGVSFTN. The active-site Proton donor is the Asp255. Cysteines 257 and 274 form a disulfide. 2 N-linked (GlcNAc...) asparagine glycosylation sites follow: Asn263 and Asn275. His278 is a catalytic residue. PbH1 repeat units lie at residues 295–316 and 327–348; these read IENV…RLKA and INNV…VLDQ. N-linked (GlcNAc...) asparagine glycans are attached at residues Asn302, Asn329, Asn354, and Asn366. Cysteines 392 and 398 form a disulfide. The PbH1 4 repeat unit spans residues 398–430; the sequence is CTNITLSNVNLTSPKGTAEIVCDDIQGGIGVDC. N-linked (GlcNAc...) asparagine glycans are attached at residues Asn400 and Asn407.

It belongs to the glycosyl hydrolase 28 family.

The protein resides in the secreted. The catalysed reaction is [(1-&gt;4)-alpha-D-galacturonosyl](n) + H2O = alpha-D-galacturonate + [(1-&gt;4)-alpha-D-galacturonosyl](n-1). Specific in hydrolyzing the terminal glycosidic bond of polygalacturonic acid and oligogalacturonates. The polypeptide is Probable exopolygalacturonase B (pgxB) (Aspergillus niger (strain ATCC MYA-4892 / CBS 513.88 / FGSC A1513)).